A 312-amino-acid chain; its full sequence is GATA zinc finger domain-containing protein 20 (312 aa).

Disordered regions lie at residues 1-45 and 213-232; these read MGKR…PQQP and TIGS…TNTN. The segment covering 29–45 has biased composition (low complexity); it reads QQQQQQQEQQPQQPQQP. The GATA-type zinc-finger motif lies at 260–287; it reads CYVCGVTETPYWRRGTDEGVMVDLCNAC.

This Dictyostelium discoideum (Social amoeba) protein is GATA zinc finger domain-containing protein 20 (gtaT).